We begin with the raw amino-acid sequence, 237 residues long: Sugar fermentation stimulation protein homolog (237 aa).

Belongs to the SfsA family.

In Pseudomonas syringae pv. syringae (strain B728a), this protein is Sugar fermentation stimulation protein homolog.